The following is a 21-amino-acid chain: Capsid vertex protein gp24 (21 aa).

The interval 1–21 (MAKINELLRESTTTNSNSIGR) is disordered. Residues 10–21 (ESTTTNSNSIGR) are compositionally biased toward polar residues.

The protein belongs to the T4 phage capsid protein family. Homopentamer. A total of 55 subunits of gp24 forms the 11 pentamers. Interacts with portal protein gp20. Interacts with gp23 that forms 160 hexamers. Post-translationally, proteolytic cleavage give rise to gp24*.

Its subcellular location is the virion. Its function is as follows. Capsid protein that self-associates to form 11 pentons, building the T=13 laevo capsid in association with 160 hexamers of gp23* and one dodecamer of gp20. The chain is Capsid vertex protein gp24 from Escherichia coli (Bacteriophage T6).